The following is a 96-amino-acid chain: Large ribosomal subunit protein bL28 (96 aa).

The span at 1-22 (MSRSCELTGKGVQSGNNVSHAN) shows a compositional bias: polar residues. The tract at residues 1–24 (MSRSCELTGKGVQSGNNVSHANNK) is disordered.

The protein belongs to the bacterial ribosomal protein bL28 family.

This chain is Large ribosomal subunit protein bL28, found in Sinorhizobium medicae (strain WSM419) (Ensifer medicae).